The sequence spans 626 residues: Trehalase (626 aa).

Helical transmembrane passes span 20 to 40 (KLFL…FIYL) and 45 to 65 (SLFF…MLDS). Residues R224, D232, N268, R277, Q279, R344, and E346 each contribute to the alpha,alpha-trehalose site. Catalysis depends on proton donor/acceptor residues D380 and E580. E580 and E595 together coordinate alpha,alpha-trehalose.

Belongs to the glycosyl hydrolase 37 family. In terms of assembly, forms homodimers. Highly expressed in flowers. Expressed at low levels in leaves and stems. Expressed in guard cells.

It is found in the cell membrane. The protein localises to the cytoplasm. It localises to the nucleus. It carries out the reaction alpha,alpha-trehalose + H2O = alpha-D-glucose + beta-D-glucose. In terms of biological role, involved in the regulation of trehalose content by hydrolyzing trehalose to glucose. May play a role in the regulation of abscisic acid-induced stomatal closure in response to drought stress. The protein is Trehalase (TRE1) of Arabidopsis thaliana (Mouse-ear cress).